The primary structure comprises 260 residues: MKQRGPAGGRSSSPKPSAPGSGAGEGPDGRSAPASQKINKASANDRSLDSVIAADKIAALKLAPVSRETEARLDRYIALLREWQAKTNLVAPSTLPHLWTRHIADSLQLVDLAPTARRWADLGSGGGFPGVVLACTMAETPGASVHLVERIAKKAAFLREAIRITTSPGVVHLAEIGDNVDRITGPVDCVTARALAPLHQLIGFAEPLMRQGAKALFPKGQDVEAELTEAAKYWNIQPQLHQSRTGDGWIVELNAAERRG.

The tract at residues 1–45 (MKQRGPAGGRSSSPKPSAPGSGAGEGPDGRSAPASQKINKASAND) is disordered. Residues 9–20 (GRSSSPKPSAPG) show a composition bias toward low complexity. Positions 33–45 (PASQKINKASAND) are enriched in polar residues. Residues Gly123, Phe128, and Arg193 each contribute to the S-adenosyl-L-methionine site.

This sequence belongs to the methyltransferase superfamily. RNA methyltransferase RsmG family.

It is found in the cytoplasm. The enzyme catalyses guanosine(527) in 16S rRNA + S-adenosyl-L-methionine = N(7)-methylguanosine(527) in 16S rRNA + S-adenosyl-L-homocysteine. Specifically methylates the N7 position of guanine in position 527 of 16S rRNA. The sequence is that of Ribosomal RNA small subunit methyltransferase G from Bradyrhizobium diazoefficiens (strain JCM 10833 / BCRC 13528 / IAM 13628 / NBRC 14792 / USDA 110).